The chain runs to 262 residues: Global transcriptional regulator CodY (262 aa).

The GAF domain stretch occupies residues 1–159; it reads MATLLEKTRK…ATTVIGVQLS (159 aa). A DNA-binding region (H-T-H motif) is located at residues 207–226; sequence ASVIADKIGITRSVIVNALR.

The protein belongs to the CodY family.

The protein localises to the cytoplasm. DNA-binding global transcriptional regulator which is involved in the adaptive response to starvation and acts by directly or indirectly controlling the expression of numerous genes in response to nutrient availability. During rapid exponential growth, CodY is highly active and represses genes whose products allow adaptation to nutrient depletion. The polypeptide is Global transcriptional regulator CodY (Lactococcus lactis subsp. lactis (strain IL1403) (Streptococcus lactis)).